The chain runs to 148 residues: 3-dehydroquinate dehydratase (148 aa).

Residue Y26 is the Proton acceptor of the active site. Residues N77, H83, and D90 each coordinate substrate. H103 serves as the catalytic Proton donor. Residues 104 to 105 and R114 each bind substrate; that span reads LS.

This sequence belongs to the type-II 3-dehydroquinase family. As to quaternary structure, homododecamer.

The enzyme catalyses 3-dehydroquinate = 3-dehydroshikimate + H2O. Its pathway is metabolic intermediate biosynthesis; chorismate biosynthesis; chorismate from D-erythrose 4-phosphate and phosphoenolpyruvate: step 3/7. In terms of biological role, catalyzes a trans-dehydration via an enolate intermediate. The sequence is that of 3-dehydroquinate dehydratase from Chlorobaculum tepidum (strain ATCC 49652 / DSM 12025 / NBRC 103806 / TLS) (Chlorobium tepidum).